The following is a 450-amino-acid chain: Phosphoglucosamine mutase (450 aa).

Residue Ser102 is the Phosphoserine intermediate of the active site. Mg(2+) is bound by residues Ser102, Asp243, Asp245, and Asp247. Ser102 is modified (phosphoserine).

This sequence belongs to the phosphohexose mutase family. Requires Mg(2+) as cofactor. In terms of processing, activated by phosphorylation.

It carries out the reaction alpha-D-glucosamine 1-phosphate = D-glucosamine 6-phosphate. In terms of biological role, catalyzes the conversion of glucosamine-6-phosphate to glucosamine-1-phosphate. The sequence is that of Phosphoglucosamine mutase from Rhizobium leguminosarum bv. trifolii (strain WSM2304).